The following is a 408-amino-acid chain: Repulsive guidance molecule B homolog drag-1 (408 aa).

An N-terminal signal peptide occupies residues 1-22; that stretch reads MSIVYLVSITFIFSVFKPITSC. At 23 to 387 the chain is on the extracellular side; it reads RVEECAAWFQ…SEIFKKCIPS (365 aa). 4 N-linked (GlcNAc...) asparagine glycosylation sites follow: N60, N134, N183, and N376. The helical transmembrane segment at 388–408 threads the bilayer; that stretch reads KSIRFYPFLAIFFFALLSLLC.

This sequence belongs to the repulsive guidance molecule (RGM) family. In terms of assembly, interacts with unc-40 (via FN6 domain), dbl-1 and sma-6. In terms of tissue distribution, expressed in pharyngeal, hypodermal and intestinal cells.

It is found in the cell membrane. Its function is as follows. Probably in association with the cell surface receptor unc-40, positively modulates the BMP-like Sma/Mab signaling pathway through interaction with both the ligand dbl-1 and its type I receptor sma-6. Regulates body size and this may be through modulation of the Sma/Mab signaling pathway. This chain is Repulsive guidance molecule B homolog drag-1, found in Caenorhabditis elegans.